A 572-amino-acid polypeptide reads, in one-letter code: MDDDYEAYHSLFLSLLGLCPSKTPINENAPVFDPEPVIAHCFKQFQQKDFRLPQTRRRIIMVPRKEDQTPLNPASQPQAPPKPIPSFKVLEARDIQEQPEDRKTWLSQRSKLRQELESFGDVKRWLENKPSITPSEAKVLHMIHEEQSAQPNASQATTRTTRKKAPRLSRLSRQMVPQLQLPEPPALSVMYSYLHSRKIKILEIFHKVGQGENQRITREEFIAAVKAVGVPLKNQEVEDIVIYLSSLGKHNTITMDILANTYKQWSMAQQRSSLATAREHYILAKHRDSLKGPLKKQEVDSAPQLPKVDLLTVPAVDTQMETRPMTLEEMEEVGKRYRERQRQHKLTIPSIQYTEQCHLVRCGNRHFDEHCLPSTIHGDMRELIDSARRHNFLVYLQCWKLCKSYGLPLTEDILMKALLYPGDKIIFQMDKVCPIRQPGGYYSDWKVFSPNLALLRSQGPGKSKRTDKKTPKKSKKMRFKEFEEFTRKLKVKRSSGLQQTHPNSFWPGHLLDKLQLYLPTVATDRSLALFSCVQHQPHVYPATYHPDHWWPLRNKNYMTHAHYDAAKVYYIN.

Disordered regions lie at residues 62-85 (VPRK…KPIP) and 146-169 (EQSA…PRLS). The 36-residue stretch at 196–231 (SRKIKILEIFHKVGQGENQRITREEFIAAVKAVGVP) folds into the EF-hand domain. Glu-212 contributes to the Ca(2+) binding site.

This is EF-hand calcium-binding domain-containing protein 12 (EFCAB12) from Homo sapiens (Human).